Reading from the N-terminus, the 84-residue chain is MSSLIEYPLVTEKAMDEMDFDNKLQFIVDTDATKDEIENEIESRYEITIIDTKTQITPRAKKKATVRLSDDDDAQDIASRIGVF.

The protein belongs to the universal ribosomal protein uL23 family. In terms of assembly, part of the 50S ribosomal subunit. Contacts protein L29.

In terms of biological role, binds to 23S rRNA. One of the proteins that surrounds the polypeptide exit tunnel on the outside of the ribosome. The chain is Large ribosomal subunit protein uL23 from Haloquadratum walsbyi (strain DSM 16790 / HBSQ001).